The following is a 239-amino-acid chain: Uridylate kinase (239 aa).

13–16 lines the ATP pocket; the sequence is KLSG. A UMP-binding site is contributed by Gly55. Positions 56 and 60 each coordinate ATP. UMP-binding positions include Asp75 and 136-143; that span reads TGNPFFTT. 4 residues coordinate ATP: Thr163, Asn164, Tyr169, and Asp172.

Belongs to the UMP kinase family. In terms of assembly, homohexamer.

It is found in the cytoplasm. It catalyses the reaction UMP + ATP = UDP + ADP. It functions in the pathway pyrimidine metabolism; CTP biosynthesis via de novo pathway; UDP from UMP (UMPK route): step 1/1. With respect to regulation, inhibited by UTP. Its function is as follows. Catalyzes the reversible phosphorylation of UMP to UDP. In Neisseria meningitidis serogroup C / serotype 2a (strain ATCC 700532 / DSM 15464 / FAM18), this protein is Uridylate kinase.